Consider the following 63-residue polypeptide: MKAQELREKGVEELNTELLNLLREQFNLRMQGASGQLQQTHLLKQVRRNVARVKTLLTEKAGV.

The protein belongs to the universal ribosomal protein uL29 family.

The protein is Large ribosomal subunit protein uL29 (rpmC) of Buchnera aphidicola subsp. Acyrthosiphon kondoi (Acyrthosiphon kondoi symbiotic bacterium).